Consider the following 142-residue polypeptide: Mitochondrial import receptor subunit TOM22 homolog (142 aa).

The segment covering 1-11 (MAAAVAAAGAG) has biased composition (low complexity). The segment at 1–40 (MAAAVAAAGAGEPLSPEELVPKAEAEKAEEDLEEDDDDEL) is disordered. At alanine 2 the chain carries N-acetylalanine. The Cytoplasmic portion of the chain corresponds to 2-82 (AAAVAAAGAG…VAQKMYRFSR (81 aa)). Serine 15 bears the Phosphoserine mark. Residues 27-40 (KAEEDLEEDDDDEL) show a composition bias toward acidic residues. An import sequence; necessary for mitochondrion outer membrane localization and integration in the TOM complex region spans residues 41–50 (DETLSERLWG). Position 43 is a phosphothreonine (threonine 43). A Phosphoserine modification is found at serine 45. Residues 83 to 103 (AALWIGTTSFMILVLPVVFET) traverse the membrane as a helical segment. A TMD; necessary for mitochondrion outer membrane localization and integration in the TOM complex region spans residues 83 to 103 (AALWIGTTSFMILVLPVVFET). The Mitochondrial intermembrane segment spans residues 104–142 (EKLQMEQQQQLQQRQILLGPNTGLSGGMPGALPPLPGKI). A C-tail signal; necessary for mitochondrion outer membrane localization and integration in the TOM complex region spans residues 123–142 (PNTGLSGGMPGALPPLPGKI).

Belongs to the Tom22 family. In terms of assembly, forms part of the preprotein translocase complex of the outer mitochondrial membrane (TOM complex) which consists of at least 7 different proteins (TOMM5, TOMM6, TOMM7, TOMM20, TOMM22, TOMM40 and TOMM70). Interacts with TOMM40. Interacts with PPP2R2B.

It localises to the mitochondrion outer membrane. Functionally, central receptor component of the translocase of the outer membrane of mitochondria (TOM complex) responsible for the recognition and translocation of cytosolically synthesized mitochondrial preproteins. Together with the peripheral receptor TOM20 functions as the transit peptide receptor and facilitates the movement of preproteins into the translocation pore. Required for the translocation across the mitochondrial outer membrane of cytochrome P450 monooxygenases. This is Mitochondrial import receptor subunit TOM22 homolog (Tomm22) from Rattus norvegicus (Rat).